We begin with the raw amino-acid sequence, 453 residues long: Keratin, type I cytoskeletal 15 (453 aa).

Residues 1-102 form a head region; the sequence is MATTLLQTSS…GGDGGLLSGN (102 aa). A phosphoserine mark is found at Ser16, Ser17, Ser34, Ser48, and Ser56. The interval 103–138 is coil 1A; that stretch reads EKITMQNLNDRLASYLEKVRALEEANADLEVKIRDW. Positions 103–415 constitute an IF rod domain; it reads EKITMQNLND…SLLEGQDARM (313 aa). Residues 139–157 are linker 1; that stretch reads YQRQSPTSPERDYSPYFKT. A coil 1B region spans residues 158–249; sequence TDELRDKILA…KNHEEEMKEF (92 aa). Residues 250–269 form a linker 12 region; sequence SNQLAGQVNVEMDAAPGVDL. The interval 270–411 is coil 2; the sequence is TRVLSEMREQ…ATYHSLLEGQ (142 aa). Lys298 participates in a covalent cross-link: Glycyl lysine isopeptide (Lys-Gly) (interchain with G-Cter in SUMO2). Thr299 and Thr321 each carry phosphothreonine. The interval 412–453 is tail; sequence DARMAGIGTGEASLGGGGGGKVRINVEESVDGKVVSSRKREI. Residue Lys444 forms a Glycyl lysine isopeptide (Lys-Gly) (interchain with G-Cter in SUMO1); alternate linkage. Lys444 is covalently cross-linked (Glycyl lysine isopeptide (Lys-Gly) (interchain with G-Cter in SUMO2); alternate).

It belongs to the intermediate filament family. As to quaternary structure, heterotetramer of two type I and two type II keratins. Interacts with NOD2. As to expression, expressed in the basal cell layers of several stratified epithelia including esophagus, tongue, stomach, epidermis and hair follicle. In the hair follicle, expression is detected mainly in the basal layer of the outer root sheath (ORS), except just above the follicle bulb where it occurs throughout its thickness. Low expression levels are seen in the single layer of ORS cells around the base of the follicle which increases in the palisade-like cells of the bulb. Also expressed in the basal cells of the sebaceous glands, and expression in the epidermis occurs in a punctate pattern.

The polypeptide is Keratin, type I cytoskeletal 15 (Ovis aries (Sheep)).